Reading from the N-terminus, the 449-residue chain is Tubulin beta-2 chain (449 aa).

Residues Gln11 and Glu69 each coordinate GTP. Glu69 contacts Mg(2+). His137 bears the Methylhistidine mark. GTP contacts are provided by Ser138, Gly142, Thr143, Gly144, Asn204, and Asn226.

Belongs to the tubulin family. In terms of assembly, dimer of alpha and beta chains. A typical microtubule is a hollow water-filled tube with an outer diameter of 25 nm and an inner diameter of 15 nM. Alpha-beta heterodimers associate head-to-tail to form protofilaments running lengthwise along the microtubule wall with the beta-tubulin subunit facing the microtubule plus end conferring a structural polarity. Microtubules usually have 13 protofilaments but different protofilament numbers can be found in some organisms and specialized cells. Mg(2+) is required as a cofactor.

The protein resides in the cytoplasm. It localises to the cytoskeleton. Its function is as follows. Tubulin is the major constituent of microtubules, a cylinder consisting of laterally associated linear protofilaments composed of alpha- and beta-tubulin heterodimers. Microtubules grow by the addition of GTP-tubulin dimers to the microtubule end, where a stabilizing cap forms. Below the cap, tubulin dimers are in GDP-bound state, owing to GTPase activity of alpha-tubulin. The chain is Tubulin beta-2 chain (tubC) from Emericella nidulans (strain FGSC A4 / ATCC 38163 / CBS 112.46 / NRRL 194 / M139) (Aspergillus nidulans).